Here is a 361-residue protein sequence, read N- to C-terminus: Feruloyl CoA ortho-hydroxylase 1 (361 aa).

In terms of domain architecture, Fe2OG dioxygenase spans 204 to 312 (TKESLFMGSI…RISVPIFVNP (109 aa)). Position 220 (Tyr220) interacts with 2-oxoglutarate. Residues His235, Asp237, and His293 each coordinate Fe cation. Residues Arg303 and Ser305 each coordinate 2-oxoglutarate.

Belongs to the iron/ascorbate-dependent oxidoreductase family. L-ascorbate is required as a cofactor. Fe(2+) serves as cofactor. Highly expressed in roots, especially in the cortex.

It carries out the reaction (E)-feruloyl-CoA + 2-oxoglutarate + O2 = (E)-6-hydroxyferuloyl-CoA + succinate + CO2. The catalysed reaction is (E)-6-hydroxyferuloyl-CoA = scopoletin + CoA. It functions in the pathway phenylpropanoid metabolism. Its function is as follows. 2-oxoglutarate (OG)- and Fe(II)-dependent dioxygenase (2OGD) involved in scopoletin biosynthesis. Converts feruloyl CoA into 6'-hydroxyferuloyl CoA but has no activity with ferulic acid, feruloylquinic acid, caffeic acid, caffeoyl CoA, p-coumaric acid, cinnamic acid, cinnamoyl CoA or benzoyl CoA. Required for the production and secretion of compounds (e.g. fluorescent coumarins) that facilitate the mobilization and uptake of iron from sources with low bioavailability or in high pH-induced iron deficiency conditions. Involved in the pathway of sideretin biosynthesis from feruloyl CoA, a redox-active catecholic metabolite exuded by roots in response to iron deficiency in order to facilitate the uptake of iron; this pathway consists in the successive conversion from feruloyl CoA to scopoletin, from scopoletin to fraxetin and from fraxetin to sideretin. Catalyzes the biosynthesis of scopoletin from feruloyl CoA. The polypeptide is Feruloyl CoA ortho-hydroxylase 1 (Arabidopsis thaliana (Mouse-ear cress)).